The following is a 176-amino-acid chain: Inner membrane-spanning protein YciB (176 aa).

A run of 5 helical transmembrane segments spans residues 3-23 (FLFD…WGIF), 49-69 (TMLW…LVLH), 72-92 (KFIQ…LVAA), 118-138 (KLNL…LYVV), and 149-169 (FKLF…SLWL).

It belongs to the YciB family.

It is found in the cell inner membrane. In terms of biological role, plays a role in cell envelope biogenesis, maintenance of cell envelope integrity and membrane homeostasis. The chain is Inner membrane-spanning protein YciB from Burkholderia thailandensis (strain ATCC 700388 / DSM 13276 / CCUG 48851 / CIP 106301 / E264).